The primary structure comprises 439 residues: Probable aspartic proteinase GIP2 (439 aa).

The N-terminal stretch at 1–23 (MASSCCLHAILLCSLLFITSTTA) is a signal peptide. The Peptidase A1 domain maps to 47 to 420 (YLTQIQQRTP…DLARSRLGFT (374 aa)). N-linked (GlcNAc...) asparagine glycosylation is found at Asn116, Asn280, Asn323, and Asn434.

The protein belongs to the peptidase A1 family. Interacts with the Phytophtora parasitica xyloglucanase XEG1 and xyloglucanase-like XLP1. Possesses stronger binding affinity with XLP1, a truncated paralog of P.parasitica XEG1 which has no enzyme activity.

It localises to the secreted. The protein resides in the extracellular space. Its subcellular location is the apoplast. In terms of biological role, involved in plant defense against Phytophtora parasitica. Contributes positively to Nicotiana resistance against P.parasitica. Binds the P.parasitica xyloglucanase XEG1 and inhibits its cell wall degrading enzyme activity and its contribution as P.parasitica virulence factor. XEG1 acts as an important virulence factor during P.parasitica infection but also acts as a pathogen-associated molecular pattern (PAMP) in Nictotiana species, where it can trigger defense responses including cell death. Its function is as follows. (Microbial infection) Possesses stronger binding affinity with XLP1, a truncated paralog of P.parasitica XEG1 which has no enzyme activity. Is impaired in its inhibitor activity towards the P.parasitica xyloglucanase XEG1 when hijacked by XLP1 binding. The polypeptide is Probable aspartic proteinase GIP2 (Nicotiana benthamiana).